Consider the following 81-residue polypeptide: Putative membrane protein insertion efficiency factor 1 (81 aa).

The protein belongs to the UPF0161 family.

The protein localises to the cell membrane. In terms of biological role, could be involved in insertion of integral membrane proteins into the membrane. The polypeptide is Putative membrane protein insertion efficiency factor 1 (Bacillus licheniformis (strain ATCC 14580 / DSM 13 / JCM 2505 / CCUG 7422 / NBRC 12200 / NCIMB 9375 / NCTC 10341 / NRRL NRS-1264 / Gibson 46)).